The primary structure comprises 348 residues: Calcium/calmodulin-dependent protein kinase type 1 (348 aa).

The Nuclear localization signal 1 signature appears at 7-22 (RDGSGPAPNATIREKY). The 257-residue stretch at 22 to 278 (YDFRDVLGTG…CQDALSHPWI (257 aa)) folds into the Protein kinase domain. Residues 28-36 (LGTGAFSKV) and K52 contribute to the ATP site. The Nuclear localization signal 2 motif lies at 71 to 78 (KVLRKLRH). D144 acts as the Proton acceptor in catalysis. At T179 the chain carries Phosphothreonine; by ckk-1. The segment at 278–318 (ISGNTAYTHDIHGTVAVHLKKSLAKRNWKKAYNAAAAIRQL) is autoinhibitory domain. Positions 288–294 (IHGTVAV) match the Nuclear export sequence motif. The Nuclear localization signal 3 motif lies at 297-307 (KKSLAKRNWKK). The interval 298–319 (KSLAKRNWKKAYNAAAAIRQLQ) is calmodulin-binding. Residues 327–338 (SNRLQKQASQQQ) show a composition bias toward polar residues. The disordered stretch occupies residues 327–348 (SNRLQKQASQQQPEPPTPAFHA). Over residues 339 to 348 (PEPPTPAFHA) the composition is skewed to pro residues.

It belongs to the protein kinase superfamily. CAMK Ser/Thr protein kinase family. CaMK subfamily. As to quaternary structure, interacts with importin ima-3; affinity for ima-3 is increased in the presence of Ca(2+) and calmodulin and leads to increased nuclear accumulation of cmk-1 in FLP neurons upon prolonged heat activation. Mg(2+) is required as a cofactor. In terms of processing, phosphorylation at Thr-179 can promote both nuclear export and import, sustaining nucleocytoplasmic shuttling. Expressed in head and tail neurons and vulval muscles. Throughout the nervous system. Detected in neurites and neuronal cell bodies. Expressed in the mechanosensory neurons, AVM and ALM, and in the interneurons, AVA, AVB and AVD. Expressed in the right and left ASE neurons where it functions cell-autonomously to control salt-avoidance learning. Expressed in FLP and AFD thermosensory neurons.

The protein localises to the nucleus. The protein resides in the cytoplasm. It carries out the reaction L-seryl-[protein] + ATP = O-phospho-L-seryl-[protein] + ADP + H(+). The enzyme catalyses L-threonyl-[protein] + ATP = O-phospho-L-threonyl-[protein] + ADP + H(+). Its activity is regulated as follows. Activated by Ca(2+)/calmodulin. Binding of calmodulin results in a conformational change that generates functional binding sites for both substrate and ATP, and thus relieves autoinhibition and lowers the Km of substrate binding. Must be phosphorylated by ckk-1 to be maximally active but this does not appear to be required for activity in AFD neurons. In terms of biological role, calcium/calmodulin-dependent protein kinase that operates in the calcium-triggered CaMKK-CaMK1 signaling cascade which results in transcriptional activation. Transcriptional activation occurs at least in part through phosphorylation of crh-1. Regulates gene expression, sensory morphology, and function of the AFD thermosensory neurons. Involved in long-term adaptation of AFD neurons to temperatures warmer than the initial acclimatized cultivation temperature. Acts in the FLP thermal nociceptors to moderate the responsiveness to noxious heat and controls neuropeptide release from FLP neurons in response to temperature elevations. Regulates the dauer decision, the decision of the larvae to enter into the alternative stress-resistant and long-lived dauer developmental stage, based on the feeding state, primarily in the AWC sensory neurons. Acts non cell-autonomously in the AWC neurons to regulate expression of the daf-28 insulin-like peptide and cell-autonomously in the ASI sensory neurons to regulate expression of the growth promoting daf-7 in a food-regulated manner. Plays a role in memory-based thermal response of an individual AFD neuron cell. Influences habituation and sensitivity to repeated mechanosensory stimuli. Involved in chemotaxis response in AWC neurons to attractant 2-heptanone, a volatile organic compound emitted by the nematode pathogenic bacterium B.nematocida B16. Acts in the ASE salt-sensing neurons to promote a type of aversive gustatory-associated learning called salt-avoidance learning via regulation of crh-1 signaling and the promotion of long-term memory formation, but is not involved in salt attraction. Represses transcription of glutamate receptor glr-1 in the nucleus basally and in response to changes in synaptic activity. This chain is Calcium/calmodulin-dependent protein kinase type 1, found in Caenorhabditis elegans.